The sequence spans 555 residues: Serine/threonine-protein kinase Nek4 (555 aa).

The 255-residue stretch at tyrosine 4–leucine 258 folds into the Protein kinase domain. ATP is bound by residues isoleucine 10–alanine 18 and lysine 33. Aspartate 129 (proton acceptor) is an active-site residue. Disordered stretches follow at residues leucine 288–glycine 328, glutamine 346–threonine 372, and asparagine 443–aspartate 477. The segment covering proline 304–alanine 320 has biased composition (polar residues).

It belongs to the protein kinase superfamily. NEK Ser/Thr protein kinase family. NIMA subfamily.

The enzyme catalyses L-seryl-[protein] + ATP = O-phospho-L-seryl-[protein] + ADP + H(+). The catalysed reaction is L-threonyl-[protein] + ATP = O-phospho-L-threonyl-[protein] + ADP + H(+). May be involved in plant development processes. This Arabidopsis thaliana (Mouse-ear cress) protein is Serine/threonine-protein kinase Nek4 (NEK4).